A 164-amino-acid chain; its full sequence is MKRKYSLVAVGGTFDRFHKGHRRLLDEAFRVGETVMIGVTSDEFAAAKGEGIEPCSVRMKNLEEYLRDKDADYHVMRLDDPYGTTVTDEAFEAIVVSRETEPVAREINAIRRNRGFRELDIITIDMVNADDGIPISSTRIRRGEIDPMGHIIKRIRGALRRRRE.

The protein belongs to the eukaryotic CoaD family.

Its subcellular location is the cytoplasm. The enzyme catalyses (R)-4'-phosphopantetheine + ATP + H(+) = 3'-dephospho-CoA + diphosphate. Its pathway is cofactor biosynthesis; coenzyme A biosynthesis. Its function is as follows. Reversibly transfers an adenylyl group from ATP to 4'-phosphopantetheine, yielding dephospho-CoA (dPCoA) and pyrophosphate. The chain is Phosphopantetheine adenylyltransferase from Methanothermobacter thermautotrophicus (strain ATCC 29096 / DSM 1053 / JCM 10044 / NBRC 100330 / Delta H) (Methanobacterium thermoautotrophicum).